Reading from the N-terminus, the 408-residue chain is Alpha-2Da adrenergic receptor (408 aa).

Topologically, residues 1-30 (MSVTPTANSTEEAANITASPRLWPYTEPAS) are extracellular. Asn8 and Asn15 each carry an N-linked (GlcNAc...) asparagine glycan. A helical transmembrane segment spans residues 31–55 (AIIILVVSLIILLTIVGNVLVIVAV). Residues 56–67 (LTSRALRAPQNL) are Cytoplasmic-facing. A helical transmembrane segment spans residues 68-93 (FLVSLACADILVATLVIPFSLANEIM). Topologically, residues 94-103 (GYWYFGSTWC) are extracellular. An intrachain disulfide couples Cys103 to Cys176. The chain crosses the membrane as a helical span at residues 104-126 (AFYLALDVLFCTSSIVHLCAISL). The Cytoplasmic segment spans residues 127–147 (DRYWSVTKAVRYNLKRTPRRI). A helical membrane pass occupies residues 148 to 170 (KCMIAVVWLISAVISFPPLIMTK). Topologically, residues 171–181 (HDEKECLINDE) are extracellular. The helical transmembrane segment at 182–205 (TWYILSSCAVSFFAPGLIMITVYC) threads the bilayer. Over 206–332 (KIYRVAKQRS…QMREKRFTFV (127 aa)) the chain is Cytoplasmic. The interval 242–306 (FEKESPSSNS…SCRVSWAAHQ (65 aa)) is disordered. The span at 260–270 (ELDDIDLEESA) shows a compositional bias: acidic residues. Residues 277-286 (RGSRFSKRRR) show a composition bias toward basic residues. Residues 333–356 (LAVVMGVFVLCWFPFFFTYSLQAV) traverse the membrane as a helical segment. Residues 357–369 (CGERCGPPEALFK) are Extracellular-facing. Residues 370–390 (LFFWIGYCNSSVNPIIYTIFN) form a helical membrane-spanning segment. Topologically, residues 391-408 (RDFRKAFKKVVCWSAQRT) are cytoplasmic.

This sequence belongs to the G-protein coupled receptor 1 family. Adrenergic receptor subfamily. ADRA2D sub-subfamily.

Its subcellular location is the cell membrane. Alpha-2 adrenergic receptors mediate the catecholamine-induced inhibition of adenylate cyclase through the action of G proteins. The order of potency for this receptor is dexmedetomidine &gt; norepinephrine &gt; epinephrine &gt; oxymetazoline. The chain is Alpha-2Da adrenergic receptor (adra2da) from Danio rerio (Zebrafish).